The primary structure comprises 533 residues: Probable anion transporter 4, chloroplastic (533 aa).

A run of 12 helical transmembrane segments spans residues 117 to 137 (MLALALALCNADRVVMSVAIV), 152 to 172 (IVQSSFLWGYLISPIAGGTLV), 179 to 199 (VVMAWGVALWSLATFLTPWAA), 203 to 223 (LWALLAARAMVGVAEGVALPC), 243 to 263 (IAMAGFQLGNVVGLMLSPILM), 267 to 287 (GIYGPFVIFGLSGFLWLLVWL), 342 to 362 (VIVANSMHSWGFFVILSWMPI), 376 to 396 (AWFSAVPWSMMAFTGYIAGFW), 417 to 437 (IGFIGPGIALIGLTTAKQPLV), 438 to 458 (ASAWLSLAVGLKSFSHLGFLI), 474 to 494 (MCLTAGTLAAIVGTVGAGFFV), and 502 to 522 (GFILLTAILYLLSALFYNIYA).

Belongs to the major facilitator superfamily. Sodium/anion cotransporter (TC 2.A.1.14) family. As to expression, expressed in leaf veins and root tips.

It localises to the plastid. Its subcellular location is the chloroplast membrane. Inorganic phosphate and probable anion transporter. This is Probable anion transporter 4, chloroplastic (ANTR4) from Arabidopsis thaliana (Mouse-ear cress).